A 1135-amino-acid polypeptide reads, in one-letter code: LRR receptor-like serine/threonine-protein kinase RGI2 (1135 aa).

A signal peptide spans 1-35 (MSLQMPIPRKKALTVSHFSITLSLFLAFFISSTSA). Residues 36-723 (STNEVSALIS…QRGVHSHRLR (688 aa)) lie on the Extracellular side of the membrane. Residues Cys69 and Cys76 are joined by a disulfide bond. Residues Asn101 and Asn117 are each glycosylated (N-linked (GlcNAc...) asparagine). LRR repeat units follow at residues 105–129 (FTSL…IGDC), 130–153 (SELI…LGKL), 154–177 (KNLQ…LGDC), and 179–203 (SLKN…KIST). 4 short sequence motifs (small peptide recognition) span residues 186–187 (FD), 208–211 (RAGG), 231–236 (VLGLAA), and Tyr259. 19 LRR repeats span residues 226 to 250 (CRNL…LGQL), 251 to 274 (SKLQ…LGNC), 276 to 298 (ELIN…LGKL), 299 to 323 (QNLE…GFMK), 325 to 345 (LNAI…SFGN), 346 to 370 (LSNL…LSNC), 372 to 395 (KLVQ…GLLK), 397 to 418 (LNIF…LAGC), 419 to 442 (QNLQ…LFQL), 444 to 466 (NLTK…IGNC), 467 to 490 (TSLV…IGFL), 491 to 514 (QNLS…ISNC), 516 to 538 (QLQM…LSSL), 539 to 562 (TKLQ…LGHL), 564 to 586 (SLNR…LGHC), 587 to 610 (TNLQ…LFDI), 612 to 634 (DLDI…RISA), 635 to 658 (LNRL…LSGL), and 659 to 683 (ENLV…VFRQ). N-linked (GlcNAc...) asparagine glycosylation occurs at Asn273. A Small peptide recognition motif is present at residues 281 to 283 (FLY). Residues 329–332 (DLSM) carry the Small peptide recognition motif. Residue Asn345 is glycosylated (N-linked (GlcNAc...) asparagine). The Small peptide recognition motif lies at 351 to 353 (ELM). N-linked (GlcNAc...) asparagine glycosylation is found at Asn358 and Asn369. 2 consecutive short sequence motifs (small peptide recognition) follow at residues 399-403 (IFLGW) and 425-428 (DLSQ). A glycan (N-linked (GlcNAc...) asparagine) is linked at Asn444. The Small peptide recognition signature appears at 447–451 (KLLLI). Asn465 is a glycosylation site (N-linked (GlcNAc...) asparagine). The Small peptide recognition signature appears at 471–473 (RLR). Asn492, Asn502, Asn521, and Asn524 each carry an N-linked (GlcNAc...) asparagine glycan. Residues Asn598 and Asn618 are each glycosylated (N-linked (GlcNAc...) asparagine). N-linked (GlcNAc...) asparagine glycans are attached at residues Asn665 and Asn707. The helical transmembrane segment at 724 to 744 (IAIGLLISVTAVLAVLGVLAV) threads the bilayer. The Cytoplasmic portion of the chain corresponds to 745–1135 (IRAKQMIRDD…ATSNVRPNLK (391 aa)). The residue at position 777 (Thr777) is a Phosphothreonine. Residues 785-1066 (LVEGNVIGKG…KDVAAMLSEI (282 aa)) enclose the Protein kinase domain. ATP-binding positions include 791-799 (IGKGCSGIV) and Lys813. Phosphotyrosine occurs at positions 868 and 907. Asp920 functions as the Proton acceptor in the catalytic mechanism. Residues Tyr963 and Tyr970 each carry the phosphotyrosine modification. The tract at residues 1077 to 1135 (DGCSGSCNNGRERGKDDSTSSVMQQTAKYLRSSSTSFSASSLLYSSSSSATSNVRPNLK) is disordered. Low complexity predominate over residues 1108-1128 (SSSTSFSASSLLYSSSSSATS).

It belongs to the protein kinase superfamily. Ser/Thr protein kinase family. As to quaternary structure, binds to RGF peptides such as RGF1, GLV5/CLEL1/RGF2, GLV7/CLEL3/RGF3, GLV3/RGF4, GLV10/CLEL7/RGF5 and RGF10/CLELN; these interactions trigger the formation of heterodimers with SERK1. Interacts with UBP13. Phosphorylated and ubiquitinated upon interaction with RGF1, thus leading to activation a subsequent degradation. Stabilized by UBP12 and UBP13-mediated deubiquitination. In terms of processing, autophosphorylated. In terms of tissue distribution, specific to root meristems, especially in lateral root meristems (LRM).

The protein resides in the membrane. It catalyses the reaction L-seryl-[protein] + ATP = O-phospho-L-seryl-[protein] + ADP + H(+). The enzyme catalyses L-threonyl-[protein] + ATP = O-phospho-L-threonyl-[protein] + ADP + H(+). In terms of biological role, together with RGI1, RGI3, RGI4 and RGI5, acts as a receptor of RGF peptides (e.g. RGF1, GLV5/CLEL1/RGF2, GLV7/CLEL3/RGF3, GLV3/RGF4, GLV10/CLEL7/RGF5 and RGF10/CLELN), peptide hormones which maintain the postembryonic root stem cell niche by regulating the expression levels and patterns of the transcription factor PLETHORA (PLT, e.g. PLT1 and PLT2). Links RGF peptides signal with their downstream components. The sequence is that of LRR receptor-like serine/threonine-protein kinase RGI2 from Arabidopsis thaliana (Mouse-ear cress).